The chain runs to 413 residues: Putative ankyrin repeat protein L92 (413 aa).

8 ANK repeats span residues 1–28 (MCAC…DINC), 32–67 (DGMS…DVNL), 68–104 (TVDG…LFES), 105–134 (DDDD…NIEA), 137–170 (DGET…KTNI), 174–208 (DRKT…NINY), 212–242 (IGET…NPNI), and 246–275 (SGNT…SPEI).

The sequence is that of Putative ankyrin repeat protein L92 from Acanthamoeba polyphaga mimivirus (APMV).